Here is a 206-residue protein sequence, read N- to C-terminus: Large ribosomal subunit protein uL4 (206 aa).

The interval Thr-48–Asn-78 is disordered.

It belongs to the universal ribosomal protein uL4 family. Part of the 50S ribosomal subunit.

Functionally, one of the primary rRNA binding proteins, this protein initially binds near the 5'-end of the 23S rRNA. It is important during the early stages of 50S assembly. It makes multiple contacts with different domains of the 23S rRNA in the assembled 50S subunit and ribosome. Its function is as follows. Forms part of the polypeptide exit tunnel. The protein is Large ribosomal subunit protein uL4 of Lawsonia intracellularis (strain PHE/MN1-00).